Reading from the N-terminus, the 386-residue chain is Circumsporozoite protein (386 aa).

The N-terminal stretch at Met-1–Cys-22 is a signal peptide. Residues His-51–Lys-304 form a disordered region. Residues Asp-72 to Asp-100 are compositionally biased toward basic and acidic residues. The segment at Lys-80–Arg-88 is required for the binding to heparan sulfate proteoglycans (HSPGs) on the surface of host hepatocytes. The interval Lys-91–Pro-95 is region I; contains the proteolytic cleavage site. 20 repeat units span residues Gly-96 to Ala-104, Gly-105 to Ala-113, Gly-114 to Ala-122, Gly-123 to Ala-131, Gly-132 to Ala-140, Gly-141 to Ala-149, Gly-150 to Ala-158, Gly-159 to Ala-167, Gly-168 to Ala-176, Gly-177 to Ala-185, Gly-186 to Ala-194, Gly-195 to Ala-203, Gly-204 to Ala-212, Gly-213 to Ala-221, Gly-222 to Ala-230, Gly-231 to Ala-239, Gly-240 to Ala-248, Gly-249 to Ala-257, Gly-258 to Ala-266, and Gly-267 to Ala-275. The segment at Gly-96–Ala-275 is 20 X 9 AA tandem repeats of G-D-R-A-[AD]-G-Q-P-A. Residues Ala-275 to Gly-292 are compositionally biased toward gly residues. Positions Gln-293–Glu-303 are enriched in low complexity. Residues Lys-312–Ala-364 enclose the TSP type-1 domain. Disulfide bonds link Cys-324–Cys-358 and Cys-328–Cys-363. O-linked (Fuc) threonine glycosylation is present at Thr-327. Cys-363 is lipidated: GPI-anchor amidated cysteine. Residues Ala-364–Asn-386 constitute a propeptide, removed in mature form.

It belongs to the plasmodium circumsporozoite protein family. In terms of processing, during host cell invasion, proteolytically cleaved at the cell membrane in the region I by a papain-like cysteine protease of parasite origin. Cleavage is triggered by the sporozoite contact with highly sulfated heparan sulfate proteoglycans (HSPGs) present on the host hepatocyte cell surface. Cleavage exposes the TSP type-1 (TSR) domain and is required for productive invasion of host hepatocytes but not for adhesion to the host cell membrane. Cleavage is dispensable for sporozoite development in the oocyst, motility and for traversal of host and vector cells. O-glycosylated; maybe by POFUT2.

It is found in the cell membrane. The protein localises to the cytoplasm. Its function is as follows. Essential sporozoite protein. In the mosquito vector, required for sporozoite development in the oocyst, migration through the vector hemolymph and entry into the vector salivary glands. In the vertebrate host, required for sporozoite migration through the host dermis and infection of host hepatocytes. Binds to highly sulfated heparan sulfate proteoglycans (HSPGs) on the surface of host hepatocytes. In the vertebrate host, binds to highly sulfated heparan sulfate proteoglycans (HSPGs) on the surface of host hepatocytes and is required for sporozoite invasion of the host hepatocytes. In Plasmodium simium, this protein is Circumsporozoite protein.